The chain runs to 437 residues: UDP-N-acetylmuramoylalanine--D-glutamate ligase (437 aa).

115–121 is an ATP binding site; the sequence is GSNGKST.

This sequence belongs to the MurCDEF family.

It is found in the cytoplasm. The catalysed reaction is UDP-N-acetyl-alpha-D-muramoyl-L-alanine + D-glutamate + ATP = UDP-N-acetyl-alpha-D-muramoyl-L-alanyl-D-glutamate + ADP + phosphate + H(+). It participates in cell wall biogenesis; peptidoglycan biosynthesis. Functionally, cell wall formation. Catalyzes the addition of glutamate to the nucleotide precursor UDP-N-acetylmuramoyl-L-alanine (UMA). The polypeptide is UDP-N-acetylmuramoylalanine--D-glutamate ligase (Vibrio parahaemolyticus serotype O3:K6 (strain RIMD 2210633)).